Reading from the N-terminus, the 526-residue chain is Rho guanine nucleotide exchange factor 3 (526 aa).

A disordered region spans residues 20 to 40; the sequence is ELPPASGPAKDAEEPSNKRVK. Residues S47 and S70 each carry the phosphoserine modification. Positions 122-304 constitute a DH domain; that stretch reads KRQEAIFELS…QGIVAEINTK (183 aa). Positions 291 to 449 constitute a PH domain; the sequence is INIIQGIVAE…WLNCIRQAKE (159 aa). The tract at residues 464–526 is disordered; it reads EGSFLNPTTG…GNSRHGESNV (63 aa). A compositionally biased stretch (polar residues) spans 466–475; sequence SFLNPTTGSR.

Interacts with RHOA and RHOB.

Its subcellular location is the cytoplasm. Acts as a guanine nucleotide exchange factor (GEF) for RhoA and RhoB GTPases. The chain is Rho guanine nucleotide exchange factor 3 (ARHGEF3) from Pongo abelii (Sumatran orangutan).